A 117-amino-acid chain; its full sequence is Large ribosomal subunit protein bL20c (117 aa).

Belongs to the bacterial ribosomal protein bL20 family.

It is found in the plastid. It localises to the chloroplast. Functionally, binds directly to 23S ribosomal RNA and is necessary for the in vitro assembly process of the 50S ribosomal subunit. It is not involved in the protein synthesizing functions of that subunit. In Draba nemorosa (Woodland whitlowgrass), this protein is Large ribosomal subunit protein bL20c.